The following is an 811-amino-acid chain: Ribonucleoside-diphosphate reductase large chain (811 aa).

Residues 1–92 (MFVYKRDGRQ…VSNLHKQTEK (92 aa)) form the ATP-cone domain. ATP-binding positions include 5 to 6 (KR), 11 to 17 (EKVAFDK), Thr-53, and Asp-57. GDP-binding residues include Ser-202 and Ser-217. The cysteines at positions 218 and 444 are disulfide-linked. DTTP is bound by residues 226–228 (DSI), Lys-243, Arg-256, and 263–264 (AG). Asn-427 is a GDP binding site. Asn-427 serves as the catalytic Proton acceptor. Cys-429 acts as the Cysteine radical intermediate in catalysis. GDP contacts are provided by residues Glu-431 and 603–606 (TAST). Glu-431 functions as the Proton acceptor in the catalytic mechanism.

Belongs to the ribonucleoside diphosphate reductase large chain family. In terms of assembly, heterodimer of a large and a small subunit. Interacts with SPD1.

It carries out the reaction a 2'-deoxyribonucleoside 5'-diphosphate + [thioredoxin]-disulfide + H2O = a ribonucleoside 5'-diphosphate + [thioredoxin]-dithiol. Under complex allosteric control mediated by deoxynucleoside triphosphates and ATP binding to separate specificity and activation sites on the large subunit. The type of nucleotide bound at the specificity site determines substrate preference. It seems probable that ATP makes the enzyme reduce CDP and UDP, dGTP favors ADP reduction and dTTP favors GDP reduction. Stimulated by ATP and inhibited by dATP binding to the activity site. Its function is as follows. Provides the precursors necessary for DNA synthesis. Catalyzes the biosynthesis of deoxyribonucleotides from the corresponding ribonucleotides. The sequence is that of Ribonucleoside-diphosphate reductase large chain (cdc22) from Schizosaccharomyces pombe (strain 972 / ATCC 24843) (Fission yeast).